We begin with the raw amino-acid sequence, 384 residues long: Omega-6 fatty acid desaturase, endoplasmic reticulum (384 aa).

The tract at residues 1 to 23 (MGAGGRMQVSPSPKKSETDTLKR) is disordered. A compositionally biased stretch (basic and acidic residues) spans 14–23 (KKSETDTLKR). The next 2 helical transmembrane spans lie at 56–76 (LIWDIIVASCFYYVATTYFPL) and 84–104 (VAWPLYWACQGVVLTGVWVIA). A Histidine box-1 motif is present at residues 105 to 109 (HECGH). The helical transmembrane segment at 117–137 (WLDDTVGLIFHSFLLVPYFSW) threads the bilayer. Positions 141 to 145 (HRRHH) match the Histidine box-2 motif. 3 helical membrane passes run 180–200 (VMLTVQFTLGWPLYWAFNVSG), 226–246 (IYVSDAGILAVCYGLYRYAAA), and 253–273 (VCLYGVPLLIVNAFLVLITYL). The Histidine box-3 signature appears at 316–320 (HVAHH).

The protein belongs to the fatty acid desaturase type 1 family.

Its subcellular location is the endoplasmic reticulum membrane. It functions in the pathway lipid metabolism; polyunsaturated fatty acid biosynthesis. Its function is as follows. ER (microsomal) omega-6 fatty acid desaturase introduces the second double bond in the biosynthesis of 18:3 fatty acids, important constituents of plant membranes. It is thought to use cytochrome b5 as an electron donor and to act on fatty acids esterified to phosphatidylcholine and, possibly, other phospholipids. In Brassica juncea (Indian mustard), this protein is Omega-6 fatty acid desaturase, endoplasmic reticulum.